Reading from the N-terminus, the 475-residue chain is Ribulose bisphosphate carboxylase large chain (475 aa).

A propeptide spanning residues 1–2 is cleaved from the precursor; it reads MS. N-acetylproline is present on P3. Residue K14 is modified to N6,N6,N6-trimethyllysine. 2 residues coordinate substrate: N123 and T173. The active-site Proton acceptor is K175. K177 is a binding site for substrate. Mg(2+) is bound by residues K201, D203, and E204. Residue K201 is modified to N6-carboxylysine. The active-site Proton acceptor is H294. The substrate site is built by R295, H327, and S379.

This sequence belongs to the RuBisCO large chain family. Type I subfamily. Heterohexadecamer of 8 large chains and 8 small chains; disulfide-linked. The disulfide link is formed within the large subunit homodimers. It depends on Mg(2+) as a cofactor. The disulfide bond which can form in the large chain dimeric partners within the hexadecamer appears to be associated with oxidative stress and protein turnover.

The protein localises to the plastid. It is found in the chloroplast. It catalyses the reaction 2 (2R)-3-phosphoglycerate + 2 H(+) = D-ribulose 1,5-bisphosphate + CO2 + H2O. It carries out the reaction D-ribulose 1,5-bisphosphate + O2 = 2-phosphoglycolate + (2R)-3-phosphoglycerate + 2 H(+). In terms of biological role, ruBisCO catalyzes two reactions: the carboxylation of D-ribulose 1,5-bisphosphate, the primary event in carbon dioxide fixation, as well as the oxidative fragmentation of the pentose substrate in the photorespiration process. Both reactions occur simultaneously and in competition at the same active site. In Castanea sativa (Sweet chestnut), this protein is Ribulose bisphosphate carboxylase large chain.